Here is a 415-residue protein sequence, read N- to C-terminus: Squalene synthase clz20 (415 aa).

Residue Asn-114 is glycosylated (N-linked (GlcNAc...) asparagine). The chain crosses the membrane as a helical span at residues 395–415; it reads ADTMYLAVLVLGVFGVVAAIL.

This sequence belongs to the phytoene/squalene synthase family. The cofactor is Mg(2+).

It localises to the membrane. It carries out the reaction 2 (2E,6E)-farnesyl diphosphate + NADH + H(+) = squalene + 2 diphosphate + NAD(+). The enzyme catalyses 2 (2E,6E)-farnesyl diphosphate + NADPH + H(+) = squalene + 2 diphosphate + NADP(+). It functions in the pathway terpene metabolism; lanosterol biosynthesis; lanosterol from farnesyl diphosphate: step 1/3. Its function is as follows. Squalene synthase; part of the gene cluster that mediates the biosynthesis of squalestatin S1 (SQS1, also known as zaragozic acid A), a heavily oxidized fungal polyketide that offers potent cholesterol lowering activity by targeting squalene synthase (SS). Catalyzes the condensation of 2 two farnesyl pyrophosphate moieties to form squalene. The presence of a gene encoding a squalene synthase supports the identification of the cluster as being responsible for SQS1 production and suggests a likely mechanism for self-resistance. This Cochliobolus lunatus (Filamentous fungus) protein is Squalene synthase clz20.